A 109-amino-acid polypeptide reads, in one-letter code: MGMKIIAGDDVLVVSGKDKGKMGKVIKVLKKKSCGKDLTFAIVSGINICKKSVKATQNSDGGIISVERPINISNIALVDSVLGIRTKVGYKFIDDKKVRFMKSSGKVIE.

The protein belongs to the universal ribosomal protein uL24 family. Part of the 50S ribosomal subunit.

One of two assembly initiator proteins, it binds directly to the 5'-end of the 23S rRNA, where it nucleates assembly of the 50S subunit. Functionally, one of the proteins that surrounds the polypeptide exit tunnel on the outside of the subunit. The protein is Large ribosomal subunit protein uL24 of Ehrlichia ruminantium (strain Gardel).